Here is a 325-residue protein sequence, read N- to C-terminus: Tetraacyldisaccharide 4'-kinase (325 aa).

An ATP-binding site is contributed by 54–61 (SVGGTGKT).

Belongs to the LpxK family.

It carries out the reaction a lipid A disaccharide + ATP = a lipid IVA + ADP + H(+). Its pathway is glycolipid biosynthesis; lipid IV(A) biosynthesis; lipid IV(A) from (3R)-3-hydroxytetradecanoyl-[acyl-carrier-protein] and UDP-N-acetyl-alpha-D-glucosamine: step 6/6. In terms of biological role, transfers the gamma-phosphate of ATP to the 4'-position of a tetraacyldisaccharide 1-phosphate intermediate (termed DS-1-P) to form tetraacyldisaccharide 1,4'-bis-phosphate (lipid IVA). The chain is Tetraacyldisaccharide 4'-kinase from Rickettsia akari (strain Hartford).